The following is a 419-amino-acid chain: MTRAVKPRRFAIRPIIYASVLSAGVLLCAFSAHADERDQLKSIQADIAAKERAVRQKQQQRASLLAQLKKQEEAISEATRKLRETQNTLNQLNKQIDEMNASIAKLEQQKAAQERSLAAQLDAAFRQGEHTGIQLILSGEESQRGQRLQAYFGYLNQARQETIAQLKQTREEVAMQRAELEEKQSEQQTLLYEQRAQQAKLTQALNERKKTLAGLESSIQQGQQQLSELRANESRLRNSIARAEAAAKARAEREAREAQAVRDRQKEATRKGTTYKPTESEKSLMSRTGGLGAPRGQAFWPVRGPTLHRYGEQLQGELRWKGMVIGASEGTEVKAIADGRVILADWLQGYGLVVVVEHGKGDMSLYGYNQSALVSVGSQVRAGQPIALVGSSGGQGRPSLYFEIRRQGQAVNPQPWLGR.

An N-terminal signal peptide occupies residues 1–34 (MTRAVKPRRFAIRPIIYASVLSAGVLLCAFSAHA). 2 coiled-coil regions span residues 35 to 124 (DERD…LDAA) and 155 to 271 (LNQA…ATRK). Over residues 252–270 (EREAREAQAVRDRQKEATR) the composition is skewed to basic and acidic residues. The disordered stretch occupies residues 252–290 (EREAREAQAVRDRQKEATRKGTTYKPTESEKSLMSRTGG).

The protein belongs to the peptidase M23B family.

Its subcellular location is the periplasm. In terms of biological role, activator of the cell wall hydrolases AmiA and AmiB. Required for septal murein cleavage and daughter cell separation during cell division. In vitro, exhibits weak endoproteolytic activity on beta-casein. The polypeptide is Murein hydrolase activator EnvC (envC) (Escherichia coli (strain K12)).